An 848-amino-acid polypeptide reads, in one-letter code: Dynein axonemal intermediate chain 4 (848 aa).

2 disordered regions span residues 345–370 (SKANVLPKDQDQRLPGSTTEKNSETS) and 431–464 (EPEPEEPEDVLESAKHEEVEEESKKEEEEEIHAE). The segment covering 359-370 (PGSTTEKNSETS) has biased composition (polar residues). The segment covering 442 to 456 (ESAKHEEVEEESKKE) has biased composition (basic and acidic residues). WD repeat units lie at residues 534 to 574 (QSPY…NVPV), 583 to 631 (KHLG…DCYD), 658 to 698 (SRQA…QYLD), 702 to 742 (GHKG…PSLS), 745 to 784 (PATSVVYDVAWSPKSSYIFAAANENRVEIWDLHISTLDPL), and 790 to 829 (NPGIKFTTILFAKQTDCLLVGDSDGQVSVYELRNMPTVLE).

As to quaternary structure, part of the multisubunit axonemal dynein complex formed at least of two heavy chains and a number of intermediate and light chains. Associated with axonemal dynein subunits such as, DNAH2, DNAI3, and DYNLT1. Interacts with DYNLT1.

It localises to the cytoplasm. The protein resides in the cytoskeleton. The protein localises to the flagellum axoneme. It is found in the cilium axoneme. Its subcellular location is the dynein axonemal particle. In terms of biological role, plays a critical role in the assembly of axonemal dynein complex, thereby playing a role in ciliary motility. The sequence is that of Dynein axonemal intermediate chain 4 from Homo sapiens (Human).